The primary structure comprises 606 residues: NADH-ubiquinone oxidoreductase chain 5 (606 aa).

Transmembrane regions (helical) follow at residues 4–24 (FSSL…AINF), 43–63 (AFIT…EMII), 84–104 (FFSM…MEFS), 114–134 (INQF…LVTA), 140–160 (LFIG…WWYG), 171–191 (AILY…WFLI), 213–233 (LMGL…HPWL), 241–261 (TPVS…FLLI), 272–292 (FGQS…AMCA), 301–320 (IIAF…IGIN), 325–347 (AFLH…GSII), 366–386 (MPFT…MPFL), 413–433 (LVAT…ALLG), 457–477 (LLIG…PMTI), 485–505 (YLKM…LEIS), and 582–602 (GLIK…TTLL).

The protein belongs to the complex I subunit 5 family. Core subunit of respiratory chain NADH dehydrogenase (Complex I) which is composed of 45 different subunits.

The protein resides in the mitochondrion inner membrane. It carries out the reaction a ubiquinone + NADH + 5 H(+)(in) = a ubiquinol + NAD(+) + 4 H(+)(out). Functionally, core subunit of the mitochondrial membrane respiratory chain NADH dehydrogenase (Complex I) which catalyzes electron transfer from NADH through the respiratory chain, using ubiquinone as an electron acceptor. Essential for the catalytic activity and assembly of complex I. The polypeptide is NADH-ubiquinone oxidoreductase chain 5 (MT-ND5) (Ovis aries (Sheep)).